The following is a 211-amino-acid chain: Ras-related protein RABB1b (211 aa).

A GTP-binding site is contributed by 13-20 (GDTGVGKS). An Effector region motif is present at residues 35–43 (HDLTIGVEF). Residues 61–65 (DTAGQ), 119–122 (NKCD), and 149–150 (SA) each bind GTP. 2 S-geranylgeranyl cysteine lipidation sites follow: C209 and C210.

The protein belongs to the small GTPase superfamily. Rab family.

The protein localises to the cell membrane. In terms of biological role, intracellular vesicle trafficking and protein transport. The protein is Ras-related protein RABB1b (RABB1B) of Arabidopsis thaliana (Mouse-ear cress).